A 153-amino-acid chain; its full sequence is Large ribosomal subunit protein bL27m (153 aa).

The N-terminal 37 residues, 1 to 37 (MINQGLFIRVNNFQLLKASLAYKKASNILTFPPIRTS), are a transit peptide targeting the mitochondrion. Residues 34-57 (IRTSTKHGGGSSKNTGDSAGRRLG) form a disordered region.

This sequence belongs to the bacterial ribosomal protein bL27 family. Component of the mitochondrial large ribosomal subunit (mt-LSU). Mature yeast 74S mitochondrial ribosomes consist of a small (37S) and a large (54S) subunit. The 37S small subunit contains a 15S ribosomal RNA (15S mt-rRNA) and at least 32 different proteins. The 54S large subunit contains a 21S rRNA (21S mt-rRNA) and at least 45 different proteins.

The protein resides in the mitochondrion. In terms of biological role, component of the mitochondrial ribosome (mitoribosome), a dedicated translation machinery responsible for the synthesis of mitochondrial genome-encoded proteins, including at least some of the essential transmembrane subunits of the mitochondrial respiratory chain. The mitoribosomes are attached to the mitochondrial inner membrane and translation products are cotranslationally integrated into the membrane. In Schizosaccharomyces pombe (strain 972 / ATCC 24843) (Fission yeast), this protein is Large ribosomal subunit protein bL27m (mrp7).